Consider the following 180-residue polypeptide: Dephospho-CoA kinase (180 aa).

The 179-residue stretch at valine 2 to glutamate 180 folds into the DPCK domain. Residue glycine 10–threonine 15 participates in ATP binding.

Belongs to the CoaE family.

The protein resides in the cytoplasm. The catalysed reaction is 3'-dephospho-CoA + ATP = ADP + CoA + H(+). It participates in cofactor biosynthesis; coenzyme A biosynthesis; CoA from (R)-pantothenate: step 5/5. In terms of biological role, catalyzes the phosphorylation of the 3'-hydroxyl group of dephosphocoenzyme A to form coenzyme A. The sequence is that of Dephospho-CoA kinase from Thermotoga maritima (strain ATCC 43589 / DSM 3109 / JCM 10099 / NBRC 100826 / MSB8).